A 154-amino-acid chain; its full sequence is Myoglobin (154 aa).

Residues 2 to 148 (GLSDGEWQLV…FRKDMASNYK (147 aa)) enclose the Globin domain. S4 bears the Phosphoserine mark. Residue H65 participates in nitrite binding. H65 contacts O2. Phosphothreonine is present on T68. H94 is a heme b binding site.

The protein belongs to the globin family. In terms of assembly, monomeric.

Its subcellular location is the cytoplasm. It is found in the sarcoplasm. It carries out the reaction Fe(III)-heme b-[protein] + nitric oxide + H2O = Fe(II)-heme b-[protein] + nitrite + 2 H(+). The enzyme catalyses H2O2 + AH2 = A + 2 H2O. Functionally, monomeric heme protein which primary function is to store oxygen and facilitate its diffusion within muscle tissues. Reversibly binds oxygen through a pentacoordinated heme iron and enables its timely and efficient release as needed during periods of heightened demand. Depending on the oxidative conditions of tissues and cells, and in addition to its ability to bind oxygen, it also has a nitrite reductase activity whereby it regulates the production of bioactive nitric oxide. Under stress conditions, like hypoxia and anoxia, it also protects cells against reactive oxygen species thanks to its pseudoperoxidase activity. This chain is Myoglobin (MB), found in Pan troglodytes (Chimpanzee).